Here is a 583-residue protein sequence, read N- to C-terminus: Afadin- and alpha-actinin-binding protein (583 aa).

Coiled-coil stretches lie at residues 108–220 (NNVE…LAIE), 255–333 (DYEA…QLTN), and 420–453 (EEKE…AIRL). A disordered region spans residues 285-328 (LSPCPPLNRGGSAEESQELGDSDREERSAETSRETLDQSCEHAR). A compositionally biased stretch (basic and acidic residues) spans 305 to 328 (DSDREERSAETSRETLDQSCEHAR). Positions 480-527 (DRMRSSSSDGQSALSVKSEPEIRTSSSKAPPVKSSAYTTFSTPKSSKS) are disordered. The span at 484 to 494 (SSSSDGQSALS) shows a compositional bias: polar residues. The segment covering 504-515 (SSSKAPPVKSSA) has biased composition (low complexity). Residues 516-527 (YTTFSTPKSSKS) are compositionally biased toward polar residues.

This sequence belongs to the ADIP family.

Its subcellular location is the cell junction. It is found in the adherens junction. The protein localises to the cytoplasm. It localises to the cytoskeleton. The protein resides in the microtubule organizing center. Its subcellular location is the centrosome. It is found in the centriolar satellite. Functionally, belongs to an adhesion system, which plays a role in the organization of homotypic, interneuronal and heterotypic cell-cell adherens junctions (AJs). Involved in cell movement. Acts as a centrosome maturation factor, probably by maintaining the integrity of the pericentriolar material and proper microtubule nucleation at mitotic spindle poles. The sequence is that of Afadin- and alpha-actinin-binding protein (ssx2ip) from Oryzias latipes (Japanese rice fish).